Reading from the N-terminus, the 307-residue chain is Predicted GPI-anchored protein 44 (307 aa).

An N-terminal signal peptide occupies residues 1–22 (MLSTNNLLILLIFSFLITNVKS). N-linked (GlcNAc...) asparagine glycans are attached at residues Asn146 and Asn217. Residues 232-261 (TPQPLLETPSQESSAPNIDSTTPTTIDNTV) form a disordered region. The span at 239-254 (TPSQESSAPNIDSTTP) shows a compositional bias: polar residues. A lipid anchor (GPI-anchor amidated glycine) is attached at Gly286. A propeptide spans 287 to 307 (GAMGYPSISVALGLVFIAYLV) (removed in mature form).

It localises to the cell membrane. This chain is Predicted GPI-anchored protein 44 (PGA44), found in Candida albicans (strain SC5314 / ATCC MYA-2876) (Yeast).